A 185-amino-acid polypeptide reads, in one-letter code: Cuticle protein 18.6, isoform B (185 aa).

6 repeat units span residues 21–24 (AAPA), 33–36 (AAPV), 41–44 (AAPV), 133–136 (AAPV), 139–142 (AAPV), and 150–153 (AAPV). The 71-residue stretch at 64–134 (HPQYSFAYNV…KEAGAHPAAA (71 aa)) folds into the Chitin-binding type R&amp;R domain.

Component of the cuticle of migratory locust which contains more than 100 different structural proteins. This is Cuticle protein 18.6, isoform B from Locusta migratoria (Migratory locust).